The primary structure comprises 230 residues: Small ribosomal subunit protein uS3 (230 aa).

Residues 39–107 (IRKFLTEKLK…PAQINISEVR (69 aa)) form the KH type-2 domain.

This sequence belongs to the universal ribosomal protein uS3 family. As to quaternary structure, part of the 30S ribosomal subunit. Forms a tight complex with proteins S10 and S14.

Binds the lower part of the 30S subunit head. Binds mRNA in the 70S ribosome, positioning it for translation. The polypeptide is Small ribosomal subunit protein uS3 (Psychromonas ingrahamii (strain DSM 17664 / CCUG 51855 / 37)).